A 176-amino-acid chain; its full sequence is CASP-like protein 5A1 (176 aa).

The Cytoplasmic portion of the chain corresponds to 1-45 (MDASHPAVYPVGVPPTAVDPPPRVRMKDYEGMPSTLGGLVLRSGQ). The helical transmembrane segment at 46-66 (FACAVTALSIMISIPDFSSVT) threads the bilayer. Position 67 (alanine 67) is a topological domain, extracellular. The helical transmembrane segment at 68 to 88 (FCYLVAAMALQLLWSVSLAVV) threads the bilayer. Residues 89–102 (DGYALLLRRTLHNP) lie on the Cytoplasmic side of the membrane. The helical transmembrane segment at 103 to 123 (VLLSLLVIGDWVTSTLSLAAA) threads the bilayer. Residues 124–151 (CSSAGITVLIDSDLAQCAHNHCGRYEAA) are Extracellular-facing. Residues 152–172 (VAMAFLTWFLVSLSFFFSFWL) traverse the membrane as a helical segment. The Cytoplasmic segment spans residues 173–176 (LATR).

It belongs to the Casparian strip membrane proteins (CASP) family. As to quaternary structure, homodimer and heterodimers.

The protein resides in the cell membrane. The sequence is that of CASP-like protein 5A1 from Selaginella moellendorffii (Spikemoss).